We begin with the raw amino-acid sequence, 412 residues long: L-cysteine:1D-myo-inositol 2-amino-2-deoxy-alpha-D-glucopyranoside ligase (412 aa).

Position 43 (cysteine 43) interacts with Zn(2+). Residues 43-46, threonine 58, and 81-83 each bind L-cysteinyl-5'-AMP; these read CGIT and NVT. A 'HIGH' region motif is present at residues 45–55; the sequence is ITPYDATHLGH. A 'ERGGDP' region motif is present at residues 186–191; the sequence is ERGGDP. Position 227 (tryptophan 227) interacts with L-cysteinyl-5'-AMP. Cysteine 231 is a Zn(2+) binding site. 249-251 provides a ligand contact to L-cysteinyl-5'-AMP; sequence GND. Histidine 256 provides a ligand contact to Zn(2+). Isoleucine 283 contributes to the L-cysteinyl-5'-AMP binding site. The 'KMSKS' region motif lies at 289–293; that stretch reads KMSKS.

It belongs to the class-I aminoacyl-tRNA synthetase family. MshC subfamily. As to quaternary structure, monomer. Zn(2+) serves as cofactor.

The catalysed reaction is 1D-myo-inositol 2-amino-2-deoxy-alpha-D-glucopyranoside + L-cysteine + ATP = 1D-myo-inositol 2-(L-cysteinylamino)-2-deoxy-alpha-D-glucopyranoside + AMP + diphosphate + H(+). In terms of biological role, catalyzes the ATP-dependent condensation of GlcN-Ins and L-cysteine to form L-Cys-GlcN-Ins. This is L-cysteine:1D-myo-inositol 2-amino-2-deoxy-alpha-D-glucopyranoside ligase from Salinispora arenicola (strain CNS-205).